Reading from the N-terminus, the 356-residue chain is Heat-inducible transcription repressor HrcA (356 aa).

The protein belongs to the HrcA family.

Negative regulator of class I heat shock genes (grpE-dnaK-dnaJ and groELS operons). Prevents heat-shock induction of these operons. This chain is Heat-inducible transcription repressor HrcA, found in Bartonella henselae (strain ATCC 49882 / DSM 28221 / CCUG 30454 / Houston 1) (Rochalimaea henselae).